The sequence spans 100 residues: Small ribosomal subunit protein uS14c (100 aa).

Residues 1-10 (MARKGLIERE) show a composition bias toward basic and acidic residues. The interval 1–29 (MARKGLIEREKKRKKLEQKYHSIRGSSKK) is disordered.

It belongs to the universal ribosomal protein uS14 family. Part of the 30S ribosomal subunit.

Its subcellular location is the plastid. The protein localises to the chloroplast. Its function is as follows. Binds 16S rRNA, required for the assembly of 30S particles. The chain is Small ribosomal subunit protein uS14c from Acorus calamus (Sweet flag).